Here is a 145-residue protein sequence, read N- to C-terminus: Small ribosomal subunit protein eS12A (145 aa).

Belongs to the eukaryotic ribosomal protein eS12 family. In terms of assembly, component of the small ribosomal subunit (SSU). Mature yeast ribosomes consist of a small (40S) and a large (60S) subunit. The 40S small subunit contains 1 molecule of ribosomal RNA (18S rRNA) and at least 33 different proteins. The large 60S subunit contains 3 rRNA molecules (25S, 5.8S and 5S rRNA) and at least 46 different proteins.

It localises to the cytoplasm. Its function is as follows. Component of the ribosome, a large ribonucleoprotein complex responsible for the synthesis of proteins in the cell. The small ribosomal subunit (SSU) binds messenger RNAs (mRNAs) and translates the encoded message by selecting cognate aminoacyl-transfer RNA (tRNA) molecules. The large subunit (LSU) contains the ribosomal catalytic site termed the peptidyl transferase center (PTC), which catalyzes the formation of peptide bonds, thereby polymerizing the amino acids delivered by tRNAs into a polypeptide chain. The nascent polypeptides leave the ribosome through a tunnel in the LSU and interact with protein factors that function in enzymatic processing, targeting, and the membrane insertion of nascent chains at the exit of the ribosomal tunnel. The chain is Small ribosomal subunit protein eS12A (rps1201) from Schizosaccharomyces pombe (strain 972 / ATCC 24843) (Fission yeast).